Reading from the N-terminus, the 295-residue chain is G1/S-specific cyclin-D1 (295 aa).

One can recognise a Cyclin N-terminal domain in the interval 28–152; it reads LRAMLKAEET…LLVNKLKWNL (125 aa). A disordered region spans residues 262 to 295; the sequence is AQQNMDPKAAEEEEEEEEEVDLACTPTDVRDVDI. A Glycyl lysine isopeptide (Lys-Gly) (interchain with G-Cter in ubiquitin) cross-link involves residue Lys-269. Residues 272-282 are compositionally biased toward acidic residues; it reads EEEEEEEEEVD. Position 286 is a phosphothreonine (Thr-286).

The protein belongs to the cyclin family. Cyclin D subfamily. Interacts with either CDK4 or CDK6 protein kinase to form a serine/threonine kinase holoenzyme complex. The cyclin subunit imparts substrate specificity to the complex. Component of the ternary complex CCND1/CDK4/CDKN1B required for nuclear translocation and modulation of CDK4-mediated kinase activity. Interacts directly with CDKN1B. Can form similar complexes with either CDKN1A or CDKN2A. Interacts with UHRF2; the interaction ubiquitinates CCND1 and appears to occur independently of phosphorylation. Interacts with USP2. Interacts (via cyclin N-terminal domain) with INSM1 (via N-terminal region); the interaction competes with the binding of CCND1 to CDK4 during cell cycle progression and inhibits CDK4 activity. Interacts with CDK4; the interaction is prevented with the binding of CCND1 to INSM1 during cell cycle progression. Phosphorylation at Thr-286 by MAP kinases is required for ubiquitination and degradation by the DCX(AMBRA1) complex. It also plays an essential role for recognition by the FBXO31 component of SCF (SKP1-cullin-F-box) protein ligase complex following DNA damage. In terms of processing, ubiquitinated at Lys-269 by the DCX(AMBRA1) complex during the transition from G1 to S cell phase, leading to its degradation: ubiquitination is dependent on Thr-286 phosphorylation. The DCX(AMBRA1) complex represents the major regulator of CCND1 stability during the G1/S transition. Also ubiquitinated by the SCF(FBXO4) and Cul7-RING(FBXW8) ubiquitin-protein ligase complexes. Following DNA damage it is ubiquitinated by the SCF(FBXO31) protein ligase complex. SCF(FBXO31) ubiquitination is dependent on Thr-286 phosphorylation. Ubiquitinated also by UHRF2 apparently in a phosphorylation-independent manner. Ubiquitination leads to its degradation and G1 arrest. Deubiquitinated by USP2; leading to its stabilization.

It is found in the nucleus. The protein resides in the cytoplasm. It localises to the nucleus membrane. Its function is as follows. Regulatory component of the cyclin D1-CDK4 (DC) complex that phosphorylates and inhibits members of the retinoblastoma (RB) protein family including RB1 and regulates the cell-cycle during G(1)/S transition. Phosphorylation of RB1 allows dissociation of the transcription factor E2F from the RB/E2F complex and the subsequent transcription of E2F target genes which are responsible for the progression through the G(1) phase. Hypophosphorylates RB1 in early G(1) phase. Cyclin D-CDK4 complexes are major integrators of various mitogenenic and antimitogenic signals. Also a substrate for SMAD3, phosphorylating SMAD3 in a cell-cycle-dependent manner and repressing its transcriptional activity. Component of the ternary complex, cyclin D1/CDK4/CDKN1B, required for nuclear translocation and activity of the cyclin D-CDK4 complex. Exhibits transcriptional corepressor activity with INSM1 on the NEUROD1 and INS promoters in a cell cycle-independent manner. The chain is G1/S-specific cyclin-D1 (CCND1) from Pongo abelii (Sumatran orangutan).